The chain runs to 510 residues: Mitochondrial metal transporter 1 (510 aa).

Residues 120–141 (ADKPSSLNLHSHTHSHGHTHSH) form a disordered region. Basic residues predominate over residues 130–141 (SHTHSHGHTHSH). Helical transmembrane passes span 165-185 (WVGL…GIVF), 194-214 (AIHA…VGLA), 241-261 (LAMA…GPVI), 286-306 (VTDI…EWIF), 333-353 (LTSL…IQSL), and 356-376 (IGGL…MCIA).

Belongs to the cation diffusion facilitator (CDF) transporter (TC 2.A.4) family. SLC30A subfamily.

The protein localises to the mitochondrion membrane. Functionally, mitochondrial metal transporter involved in mitochondrial iron accumulation. This is Mitochondrial metal transporter 1 (MMT1) from Saccharomyces cerevisiae (strain ATCC 204508 / S288c) (Baker's yeast).